We begin with the raw amino-acid sequence, 327 residues long: Probable cell division protein WhiA (327 aa).

The H-T-H motif DNA-binding region spans 275-308 (SLEELGRLADPPMTKDAVAGRIRRLLSMADRKAK).

The protein belongs to the WhiA family.

Its function is as follows. Involved in cell division and chromosome segregation. This Mycobacterium bovis (strain ATCC BAA-935 / AF2122/97) protein is Probable cell division protein WhiA.